We begin with the raw amino-acid sequence, 138 residues long: Vesicle transport protein GOT1B (138 aa).

Position 1 is an N-acetylmethionine (M1). Over 1–9 (MISLTDTQK) the chain is Cytoplasmic. Residues 10–30 (IGMGLTGFGVFFLFFGMILFF) form a helical membrane-spanning segment. Over 31–32 (DK) the chain is Lumenal. The helical transmembrane segment at 33–53 (ALLAIGNVLFVAGLAFVIGLE) threads the bilayer. Residues 54–68 (RTFRFFFQRHKVKAT) lie on the Cytoplasmic side of the membrane. Residue E90 is a topological domain, lumenal. Residues 91 to 109 (IYGFFLLFRGFFPVVVGFI) traverse the membrane as a helical segment. At 110-138 (RRVPVLGSLLNLPGIRSFVDKVGESNNMV) the chain is on the cytoplasmic side.

The protein belongs to the GOT1 family.

It localises to the golgi apparatus membrane. Its function is as follows. May be involved in fusion of ER-derived transport vesicles with the Golgi complex. This is Vesicle transport protein GOT1B (Golt1b) from Mus musculus (Mouse).